Reading from the N-terminus, the 329-residue chain is Cytosolic arginine sensor for mTORC1 subunit 1 (329 aa).

Ser14 is subject to Phosphoserine. ACT domains follow at residues 72-138 (AEAT…HTLA) and 260-321 (GELW…EVLQ). L-arginine is bound by residues 111-112 (SV), Gly274, 280-281 (IV), and 300-304 (TFNFD).

It belongs to the GATS family. In terms of assembly, forms homodimers and heterodimers with CASTOR2. Interacts with the GATOR2 complex which is composed of MIOS, SEC13, SEH1L, WDR24 and WDR59; the interaction is negatively regulated by arginine. Interacts with TM4SF5; the interaction is positively regulated by leucine and is negatively regulated by arginine. In terms of processing, phosphorylation at Ser-14 by AKT1, promoting the interaction between CASTOR1 and RNF167. Post-translationally, ubiquitinated by RNF167 via 'Lys-29'-polyubiquitination, leading to its degradation, releasing the GATOR2 complex. Ubiquitination by RNF167 is promoted by phosphorylation at Ser-14 by AKT1.

The protein resides in the cytoplasm. Its subcellular location is the cytosol. In terms of biological role, functions as an intracellular arginine sensor within the amino acid-sensing branch of the TORC1 signaling pathway. As a homodimer or a heterodimer with CASTOR2, binds and inhibits the GATOR subcomplex GATOR2 and thereby mTORC1. Binding of arginine to CASTOR1 allosterically disrupts the interaction of CASTOR1-containing dimers with GATOR2 which can in turn activate mTORC1 and the TORC1 signaling pathway. The protein is Cytosolic arginine sensor for mTORC1 subunit 1 of Bos taurus (Bovine).